We begin with the raw amino-acid sequence, 302 residues long: MNAPHKPVLLNEVLESFKDRKGTIVDATLGYGGHSEALLKSNPDIKIVGIDQDSEAIAFSKQRLASYGDRVQIIQGRFADVIEDILQTHDVQGVLADIGVSSLQLDKKDRGFSIHSENLDMRMDQNAELSAYHVVNTYDEEELKRIFKEYGEIRHSGKLAKAIIHNRPIQSATQLAEIAQKILPKNKRVHPATTLFQAIRIEVNKELDQLKGLLDALERHKPKGAKVAIITFHSLEDRIVKQHFKEWAKSCICPPEAMRCTCGANHALGNIVTKKPIVASIDELEENPRARSAKLRVFQFKE.

Residues 32–34, Asp51, Phe78, Asp97, and Gln104 contribute to the S-adenosyl-L-methionine site; that span reads GGH.

Belongs to the methyltransferase superfamily. RsmH family.

The protein localises to the cytoplasm. The enzyme catalyses cytidine(1402) in 16S rRNA + S-adenosyl-L-methionine = N(4)-methylcytidine(1402) in 16S rRNA + S-adenosyl-L-homocysteine + H(+). Its function is as follows. Specifically methylates the N4 position of cytidine in position 1402 (C1402) of 16S rRNA. This Nitratiruptor sp. (strain SB155-2) protein is Ribosomal RNA small subunit methyltransferase H.